A 397-amino-acid chain; its full sequence is Phosphoglycerate kinase (397 aa).

Substrate-binding positions include 22–24, Arg-37, 60–63, Arg-119, and Arg-152; these read DLN and HFGR. ATP contacts are provided by residues Lys-202, Glu-324, and 354–357; that span reads GGDT.

It belongs to the phosphoglycerate kinase family. As to quaternary structure, monomer.

It localises to the cytoplasm. It carries out the reaction (2R)-3-phosphoglycerate + ATP = (2R)-3-phospho-glyceroyl phosphate + ADP. The protein operates within carbohydrate degradation; glycolysis; pyruvate from D-glyceraldehyde 3-phosphate: step 2/5. This Rhizorhabdus wittichii (strain DSM 6014 / CCUG 31198 / JCM 15750 / NBRC 105917 / EY 4224 / RW1) (Sphingomonas wittichii) protein is Phosphoglycerate kinase.